Consider the following 903-residue polypeptide: Cell division cycle protein 48 homolog MJ1156 (903 aa).

ATP is bound by residues Gly220–Thr227 and Gly493–Thr500.

This sequence belongs to the AAA ATPase family. CDC48 subfamily.

The protein is Cell division cycle protein 48 homolog MJ1156 of Methanocaldococcus jannaschii (strain ATCC 43067 / DSM 2661 / JAL-1 / JCM 10045 / NBRC 100440) (Methanococcus jannaschii).